A 189-amino-acid chain; its full sequence is UPF0312 protein VC_A0539 (189 aa).

Residues 1–22 (MKKTLMAVGLAAVMSIPFAANA) form the signal peptide.

It belongs to the UPF0312 family. Type 1 subfamily.

Its subcellular location is the periplasm. The polypeptide is UPF0312 protein VC_A0539 (Vibrio cholerae serotype O1 (strain ATCC 39315 / El Tor Inaba N16961)).